We begin with the raw amino-acid sequence, 1036 residues long: Isoleucine--tRNA ligase (1036 aa).

The short motif at 46 to 56 (PFATGLPHYGH) is the 'HIGH' region element. The 'KMSKS' region signature appears at 589 to 593 (KMSKR). ATP is bound at residue K592.

It belongs to the class-I aminoacyl-tRNA synthetase family. IleS type 2 subfamily. In terms of assembly, monomer. Zn(2+) is required as a cofactor.

The protein localises to the cytoplasm. It carries out the reaction tRNA(Ile) + L-isoleucine + ATP = L-isoleucyl-tRNA(Ile) + AMP + diphosphate. In terms of biological role, catalyzes the attachment of isoleucine to tRNA(Ile). As IleRS can inadvertently accommodate and process structurally similar amino acids such as valine, to avoid such errors it has two additional distinct tRNA(Ile)-dependent editing activities. One activity is designated as 'pretransfer' editing and involves the hydrolysis of activated Val-AMP. The other activity is designated 'posttransfer' editing and involves deacylation of mischarged Val-tRNA(Ile). This Chlamydia trachomatis serovar L2b (strain UCH-1/proctitis) protein is Isoleucine--tRNA ligase.